The chain runs to 226 residues: MADVALKRGPGRGRFVTFEGGEGAGKSTQIKMLAARLESEGMRVVLTREPGGSPGAEIMRHLVLSGMGKLLGAEAETLLFAAARDDHVRNVILPALSQGSWVLCDRFFDSTRAYQGSLGKVAPDVLNAMQRVTIGDLKPDLTLILDVPVEVGLKRAAARRGAGAPDRFEAEDIKFHKGLRDAFHKIADDDPKRCVLIDATAGPDPVSLLVWDAVRERLFTAVAAAS.

Residue 20-27 coordinates ATP; it reads GGEGAGKS.

Belongs to the thymidylate kinase family.

The catalysed reaction is dTMP + ATP = dTDP + ADP. Phosphorylation of dTMP to form dTDP in both de novo and salvage pathways of dTTP synthesis. This Bradyrhizobium sp. (strain BTAi1 / ATCC BAA-1182) protein is Thymidylate kinase.